A 1317-amino-acid chain; its full sequence is Kinesin-like protein KIF16B (1317 aa).

The Kinesin motor domain maps to 3 to 358; sequence SVKVAVRVRP…LRYANRAKNI (356 aa). 102-109 provides a ligand contact to ATP; the sequence is GQTGSGKS. Residues 370–425 adopt a coiled-coil conformation; that stretch reads VKLIRELRAEIARLKTLLAQGNQIALLDSPTALSMEEKLQQNEARVQELTKEWTNK. Position 398 is a phosphoserine (Ser398). An FHA domain is found at 478 to 529; sequence TYVGRDDASTEQDIVLHGLDLESEHCIFENIGGTVTLIPLSGSQCSVNGVQI. Thr577 is subject to Phosphothreonine. At Ser582 the chain carries Phosphoserine. Coiled-coil stretches lie at residues 595 to 882 and 936 to 1087; these read GLEF…DESV and LSLD…VQKD. Polar residues predominate over residues 1036–1048; sequence LASLNSGSREQSG. The disordered stretch occupies residues 1036–1057; the sequence is LASLNSGSREQSGLQASLEAEQ. Ser1052 bears the Phosphoserine mark. The PX domain occupies 1182–1296; sequence DPIKISIPRY…KVGLTLSKHT (115 aa).

The protein belongs to the TRAFAC class myosin-kinesin ATPase superfamily. Kinesin family. In terms of assembly, interacts with RAB14. Interacts with PTPN21. As to expression, primarily expressed in brain. Also present in kidney, liver, intestine, placenta, leukocytes, heart and skeletal muscle (at protein level).

The protein localises to the cytoplasm. The protein resides in the cytoskeleton. Its subcellular location is the early endosome membrane. It localises to the spindle. Functionally, plus end-directed microtubule-dependent motor protein involved in endosome transport and receptor recycling and degradation. Regulates the plus end motility of early endosomes and the balance between recycling and degradation of receptors such as EGF receptor (EGFR) and FGF receptor (FGFR). Regulates the Golgi to endosome transport of FGFR-containing vesicles during early development, a key process for developing basement membrane and epiblast and primitive endoderm lineages during early postimplantation development. The chain is Kinesin-like protein KIF16B (KIF16B) from Homo sapiens (Human).